A 209-amino-acid polypeptide reads, in one-letter code: Large ribosomal subunit protein uL3 (209 aa).

The disordered stretch occupies residues 144–165 (GSMGAASDPSRTFKNKKMPGHM).

This sequence belongs to the universal ribosomal protein uL3 family. In terms of assembly, part of the 50S ribosomal subunit. Forms a cluster with proteins L14 and L19.

Functionally, one of the primary rRNA binding proteins, it binds directly near the 3'-end of the 23S rRNA, where it nucleates assembly of the 50S subunit. In Clostridium novyi (strain NT), this protein is Large ribosomal subunit protein uL3.